The primary structure comprises 341 residues: Glycerol-3-phosphate dehydrogenase [NAD(P)+] (341 aa).

NADPH-binding residues include S15, W16, R36, and K110. Residues K110, G139, and S141 each coordinate sn-glycerol 3-phosphate. Residue A143 coordinates NADPH. K194, D247, S257, R258, and N259 together coordinate sn-glycerol 3-phosphate. The active-site Proton acceptor is the K194. Position 258 (R258) interacts with NADPH. The NADPH site is built by V282 and E284.

This sequence belongs to the NAD-dependent glycerol-3-phosphate dehydrogenase family.

Its subcellular location is the cytoplasm. The catalysed reaction is sn-glycerol 3-phosphate + NAD(+) = dihydroxyacetone phosphate + NADH + H(+). The enzyme catalyses sn-glycerol 3-phosphate + NADP(+) = dihydroxyacetone phosphate + NADPH + H(+). It functions in the pathway membrane lipid metabolism; glycerophospholipid metabolism. Functionally, catalyzes the reduction of the glycolytic intermediate dihydroxyacetone phosphate (DHAP) to sn-glycerol 3-phosphate (G3P), the key precursor for phospholipid synthesis. The sequence is that of Glycerol-3-phosphate dehydrogenase [NAD(P)+] from Stenotrophomonas maltophilia (strain K279a).